A 316-amino-acid polypeptide reads, in one-letter code: 4-hydroxy-3-methylbut-2-enyl diphosphate reductase (316 aa).

Cysteine 12 is a binding site for [4Fe-4S] cluster. Residues histidine 43 and histidine 81 each coordinate (2E)-4-hydroxy-3-methylbut-2-enyl diphosphate. Residues histidine 43 and histidine 81 each contribute to the dimethylallyl diphosphate site. 2 residues coordinate isopentenyl diphosphate: histidine 43 and histidine 81. Position 103 (cysteine 103) interacts with [4Fe-4S] cluster. Position 131 (histidine 131) interacts with (2E)-4-hydroxy-3-methylbut-2-enyl diphosphate. Histidine 131 is a dimethylallyl diphosphate binding site. Histidine 131 contacts isopentenyl diphosphate. Glutamate 133 serves as the catalytic Proton donor. Threonine 170 is a (2E)-4-hydroxy-3-methylbut-2-enyl diphosphate binding site. Position 198 (cysteine 198) interacts with [4Fe-4S] cluster. Serine 226, asparagine 228, and serine 271 together coordinate (2E)-4-hydroxy-3-methylbut-2-enyl diphosphate. Dimethylallyl diphosphate-binding residues include serine 226, asparagine 228, and serine 271. 3 residues coordinate isopentenyl diphosphate: serine 226, asparagine 228, and serine 271.

This sequence belongs to the IspH family. [4Fe-4S] cluster serves as cofactor.

It carries out the reaction isopentenyl diphosphate + 2 oxidized [2Fe-2S]-[ferredoxin] + H2O = (2E)-4-hydroxy-3-methylbut-2-enyl diphosphate + 2 reduced [2Fe-2S]-[ferredoxin] + 2 H(+). The enzyme catalyses dimethylallyl diphosphate + 2 oxidized [2Fe-2S]-[ferredoxin] + H2O = (2E)-4-hydroxy-3-methylbut-2-enyl diphosphate + 2 reduced [2Fe-2S]-[ferredoxin] + 2 H(+). It functions in the pathway isoprenoid biosynthesis; dimethylallyl diphosphate biosynthesis; dimethylallyl diphosphate from (2E)-4-hydroxy-3-methylbutenyl diphosphate: step 1/1. It participates in isoprenoid biosynthesis; isopentenyl diphosphate biosynthesis via DXP pathway; isopentenyl diphosphate from 1-deoxy-D-xylulose 5-phosphate: step 6/6. Functionally, catalyzes the conversion of 1-hydroxy-2-methyl-2-(E)-butenyl 4-diphosphate (HMBPP) into a mixture of isopentenyl diphosphate (IPP) and dimethylallyl diphosphate (DMAPP). Acts in the terminal step of the DOXP/MEP pathway for isoprenoid precursor biosynthesis. The sequence is that of 4-hydroxy-3-methylbut-2-enyl diphosphate reductase from Geobacillus kaustophilus (strain HTA426).